We begin with the raw amino-acid sequence, 79 residues long: MNRQREELIILKRIEYVEIIKKIPGTPFRLGGIYEIERVGSANARVRINNSIYQVPKEALKVVEQVERERWEENDKIHD.

This is an uncharacterized protein from Listeria innocua serovar 6a (strain ATCC BAA-680 / CLIP 11262).